Here is a 132-residue protein sequence, read N- to C-terminus: Large ribosomal subunit protein bL17 (132 aa).

This sequence belongs to the bacterial ribosomal protein bL17 family. As to quaternary structure, part of the 50S ribosomal subunit. Contacts protein L32.

The protein is Large ribosomal subunit protein bL17 of Marinobacter nauticus (strain ATCC 700491 / DSM 11845 / VT8) (Marinobacter aquaeolei).